A 174-amino-acid chain; its full sequence is Crossover junction endodeoxyribonuclease RuvC (174 aa).

Residues Asp8, Glu67, and Asp139 contribute to the active site. Mg(2+) contacts are provided by Asp8, Glu67, and Asp139.

This sequence belongs to the RuvC family. In terms of assembly, homodimer which binds Holliday junction (HJ) DNA. The HJ becomes 2-fold symmetrical on binding to RuvC with unstacked arms; it has a different conformation from HJ DNA in complex with RuvA. In the full resolvosome a probable DNA-RuvA(4)-RuvB(12)-RuvC(2) complex forms which resolves the HJ. It depends on Mg(2+) as a cofactor.

Its subcellular location is the cytoplasm. The catalysed reaction is Endonucleolytic cleavage at a junction such as a reciprocal single-stranded crossover between two homologous DNA duplexes (Holliday junction).. In terms of biological role, the RuvA-RuvB-RuvC complex processes Holliday junction (HJ) DNA during genetic recombination and DNA repair. Endonuclease that resolves HJ intermediates. Cleaves cruciform DNA by making single-stranded nicks across the HJ at symmetrical positions within the homologous arms, yielding a 5'-phosphate and a 3'-hydroxyl group; requires a central core of homology in the junction. The consensus cleavage sequence is 5'-(A/T)TT(C/G)-3'. Cleavage occurs on the 3'-side of the TT dinucleotide at the point of strand exchange. HJ branch migration catalyzed by RuvA-RuvB allows RuvC to scan DNA until it finds its consensus sequence, where it cleaves and resolves the cruciform DNA. This chain is Crossover junction endodeoxyribonuclease RuvC, found in Pseudomonas fluorescens (strain ATCC BAA-477 / NRRL B-23932 / Pf-5).